The sequence spans 231 residues: MIP18 family protein YHR122W (231 aa).

2 disordered regions span residues 1 to 26 (MSEFLNENPDILEENQLPTRKEDSTK) and 75 to 100 (LTSDEDSLPAESEDESVAGGGKEEEE). S2 is modified (N-acetylserine). Acidic residues predominate over residues 76 to 90 (TSDEDSLPAESEDES).

This sequence belongs to the MIP18 family.

Functionally, may play a role in chromosome segregation through establishment of sister chromatid cohesion. The sequence is that of MIP18 family protein YHR122W from Saccharomyces cerevisiae (strain ATCC 204508 / S288c) (Baker's yeast).